The chain runs to 650 residues: Rab proteins geranylgeranyltransferase component A 1 (650 aa).

Disordered regions lie at residues 156-208 (IPAE…ETPK) and 603-650 (PAPP…EPSE). Residues 177-190 (ATGKKENSDAKSST) are compositionally biased toward basic and acidic residues. The segment covering 616–634 (DSSQQEVPESSVTPETNSE) has biased composition (polar residues).

It belongs to the Rab GDI family. Monomer. Heterotrimer composed of RABGGTA, RABGGTB and CHM; within this trimer, RABGGTA and RABGGTB form the catalytic component B, while CHM (component A) mediates Rab protein binding. Can associate with the Rab GGTase dimer (RGGT or component B) prior to Rab protein binding; the association is stabilized by geranylgeranyl pyrophosphate (GGpp). The CHM:RGGT:Rab complex is destabilized by GGpp. Interacts with RAB1A, RAB1B, RAB7A and RAB27A and mediates their prenylation. Interacts with RAB5A. Interacts with the non-phosphorylated forms of RAB3A, RAB3B, RAB3C, RAB3D, RAB5B, RAB5C RAB8A, RAB8B, RAB10, RAB12, RAB35, and RAB43. As to expression, most abundant in the heart, brain, and spleen. Lower levels seen in the lung, liver, muscle and kidney. Extremely low levels seen in the testis.

It localises to the cytoplasm. The protein resides in the cytosol. Substrate-binding subunit of the Rab geranylgeranyltransferase (GGTase) complex. Binds unprenylated Rab proteins and presents the substrate peptide to the catalytic component B composed of RABGGTA and RABGGTB, and remains bound to it after the geranylgeranyl transfer reaction. The component A is thought to be regenerated by transferring its prenylated Rab back to the donor membrane. Besides, a pre-formed complex consisting of CHM and the Rab GGTase dimer (RGGT or component B) can bind to and prenylate Rab proteins; this alternative pathway is proposed to be the predominant pathway for Rab protein geranylgeranylation. The protein is Rab proteins geranylgeranyltransferase component A 1 (Chm) of Rattus norvegicus (Rat).